The primary structure comprises 250 residues: Adapter protein MecA (250 aa).

The protein belongs to the MecA family. Homodimer.

Its function is as follows. Enables the recognition and targeting of unfolded and aggregated proteins to the ClpC protease or to other proteins involved in proteolysis. In Streptococcus sanguinis (strain SK36), this protein is Adapter protein MecA.